Here is a 357-residue protein sequence, read N- to C-terminus: UDP-N-acetylglucosamine--N-acetylmuramyl-(pentapeptide) pyrophosphoryl-undecaprenol N-acetylglucosamine transferase (357 aa).

UDP-N-acetyl-alpha-D-glucosamine is bound by residues 15 to 17 (TGG), N123, R164, S190, and Q284.

Belongs to the glycosyltransferase 28 family. MurG subfamily.

It is found in the cell inner membrane. It catalyses the reaction di-trans,octa-cis-undecaprenyl diphospho-N-acetyl-alpha-D-muramoyl-L-alanyl-D-glutamyl-meso-2,6-diaminopimeloyl-D-alanyl-D-alanine + UDP-N-acetyl-alpha-D-glucosamine = di-trans,octa-cis-undecaprenyl diphospho-[N-acetyl-alpha-D-glucosaminyl-(1-&gt;4)]-N-acetyl-alpha-D-muramoyl-L-alanyl-D-glutamyl-meso-2,6-diaminopimeloyl-D-alanyl-D-alanine + UDP + H(+). Its pathway is cell wall biogenesis; peptidoglycan biosynthesis. In terms of biological role, cell wall formation. Catalyzes the transfer of a GlcNAc subunit on undecaprenyl-pyrophosphoryl-MurNAc-pentapeptide (lipid intermediate I) to form undecaprenyl-pyrophosphoryl-MurNAc-(pentapeptide)GlcNAc (lipid intermediate II). This is UDP-N-acetylglucosamine--N-acetylmuramyl-(pentapeptide) pyrophosphoryl-undecaprenol N-acetylglucosamine transferase from Synechococcus elongatus (strain ATCC 33912 / PCC 7942 / FACHB-805) (Anacystis nidulans R2).